Here is a 95-residue protein sequence, read N- to C-terminus: Glutamyl-tRNA(Gln) amidotransferase subunit C (95 aa).

This sequence belongs to the GatC family. Heterotrimer of A, B and C subunits.

It carries out the reaction L-glutamyl-tRNA(Gln) + L-glutamine + ATP + H2O = L-glutaminyl-tRNA(Gln) + L-glutamate + ADP + phosphate + H(+). The enzyme catalyses L-aspartyl-tRNA(Asn) + L-glutamine + ATP + H2O = L-asparaginyl-tRNA(Asn) + L-glutamate + ADP + phosphate + 2 H(+). Functionally, allows the formation of correctly charged Asn-tRNA(Asn) or Gln-tRNA(Gln) through the transamidation of misacylated Asp-tRNA(Asn) or Glu-tRNA(Gln) in organisms which lack either or both of asparaginyl-tRNA or glutaminyl-tRNA synthetases. The reaction takes place in the presence of glutamine and ATP through an activated phospho-Asp-tRNA(Asn) or phospho-Glu-tRNA(Gln). In Moraxella catarrhalis (Branhamella catarrhalis), this protein is Glutamyl-tRNA(Gln) amidotransferase subunit C.